A 510-amino-acid chain; its full sequence is 2-isopropylmalate synthase (510 aa).

The region spanning 5-267 (LVIFDTTLRD…DTRIDTTQIV (263 aa)) is the Pyruvate carboxyltransferase domain. Mn(2+) contacts are provided by Asp14, His202, His204, and Asn238. Residues 392–510 (RLLSLHAVSE…SSLERTHPQI (119 aa)) form a regulatory domain region.

Belongs to the alpha-IPM synthase/homocitrate synthase family. LeuA type 1 subfamily. In terms of assembly, homodimer. Mn(2+) serves as cofactor.

It is found in the cytoplasm. The catalysed reaction is 3-methyl-2-oxobutanoate + acetyl-CoA + H2O = (2S)-2-isopropylmalate + CoA + H(+). It participates in amino-acid biosynthesis; L-leucine biosynthesis; L-leucine from 3-methyl-2-oxobutanoate: step 1/4. Catalyzes the condensation of the acetyl group of acetyl-CoA with 3-methyl-2-oxobutanoate (2-ketoisovalerate) to form 3-carboxy-3-hydroxy-4-methylpentanoate (2-isopropylmalate). This is 2-isopropylmalate synthase from Nitrosomonas europaea (strain ATCC 19718 / CIP 103999 / KCTC 2705 / NBRC 14298).